Here is a 320-residue protein sequence, read N- to C-terminus: MIKKIGVLTSGGDAPGMNAAIRGVVRAALTEGLEVMGIYDGYLGLYEDRMVQLDRYSVSDMINRGGTFLGSARFPEFRDENIRAVAIENLKKRGIDALVVIGGDGSYMGAKRLTEMGFPCIGLPGTIDNDIKGTDYTIGYFTALGTVVEAIDRLRDTSSSHQRISIVEVMGRYCGDLTLAAAIAGGCEFIVVPEVEFNREDLVAEIKAGIAKGKKHAIVAITEHMCDVDELAHFIEKETGRETRATVLGHIQRGGSPVPYDRILASRMGAYAIDLLLEGHGGRCVGIQNEQLVHHDIIDAIENMKRPFKSDWMECAKKLY.

Residue Gly-12 coordinates ATP. Residues 22 to 26 (RGVVR) and 55 to 60 (RYSVSD) each bind ADP. ATP contacts are provided by residues 73-74 (RF) and 103-106 (GDGS). Asp-104 contributes to the Mg(2+) binding site. 126–128 (TID) is a substrate binding site. Asp-128 functions as the Proton acceptor in the catalytic mechanism. Arg-155 contacts ADP. Substrate is bound by residues Arg-163 and 170–172 (MGR). Residues 186 to 188 (GCE), Lys-212, and 214 to 216 (KKH) each bind ADP. Substrate-binding positions include Glu-223, Arg-244, and 250–253 (HIQR).

The protein belongs to the phosphofructokinase type A (PFKA) family. ATP-dependent PFK group I subfamily. Prokaryotic clade 'B1' sub-subfamily. As to quaternary structure, homotetramer. Mg(2+) serves as cofactor.

Its subcellular location is the cytoplasm. It carries out the reaction beta-D-fructose 6-phosphate + ATP = beta-D-fructose 1,6-bisphosphate + ADP + H(+). Its pathway is carbohydrate degradation; glycolysis; D-glyceraldehyde 3-phosphate and glycerone phosphate from D-glucose: step 3/4. With respect to regulation, allosterically activated by ADP and other diphosphonucleosides, and allosterically inhibited by phosphoenolpyruvate. Catalyzes the phosphorylation of D-fructose 6-phosphate to fructose 1,6-bisphosphate by ATP, the first committing step of glycolysis. The protein is ATP-dependent 6-phosphofructokinase of Salmonella agona (strain SL483).